Consider the following 599-residue polypeptide: Elongation factor 4 (599 aa).

Positions 4-186 (EHIRNFSIIA…EIVKKIPPPK (183 aa)) constitute a tr-type G domain. Residues 16 to 21 (DHGKST) and 133 to 136 (NKID) contribute to the GTP site.

Belongs to the TRAFAC class translation factor GTPase superfamily. Classic translation factor GTPase family. LepA subfamily.

It localises to the cell inner membrane. It carries out the reaction GTP + H2O = GDP + phosphate + H(+). Functionally, required for accurate and efficient protein synthesis under certain stress conditions. May act as a fidelity factor of the translation reaction, by catalyzing a one-codon backward translocation of tRNAs on improperly translocated ribosomes. Back-translocation proceeds from a post-translocation (POST) complex to a pre-translocation (PRE) complex, thus giving elongation factor G a second chance to translocate the tRNAs correctly. Binds to ribosomes in a GTP-dependent manner. This chain is Elongation factor 4, found in Citrifermentans bemidjiense (strain ATCC BAA-1014 / DSM 16622 / JCM 12645 / Bem) (Geobacter bemidjiensis).